Consider the following 397-residue polypeptide: Mannan endo-1,4-beta-mannosidase 1 (397 aa).

Positions 1–23 (MSYARRSCICGLFLLFLALVCEA) are cleaved as a signal peptide. Trp83 and Asn198 together coordinate substrate. Glu199 (proton donor) is an active-site residue. Tyr276 lines the substrate pocket. The active-site Nucleophile is the Glu316. Substrate is bound at residue Trp354.

This sequence belongs to the glycosyl hydrolase 5 (cellulase A) family.

The protein resides in the secreted. It catalyses the reaction Random hydrolysis of (1-&gt;4)-beta-D-mannosidic linkages in mannans, galactomannans and glucomannans.. This chain is Mannan endo-1,4-beta-mannosidase 1 (MAN1), found in Solanum lycopersicum (Tomato).